We begin with the raw amino-acid sequence, 212 residues long: Cytochrome c biogenesis ATP-binding export protein CcmA (212 aa).

Positions 7-209 constitute an ABC transporter domain; that stretch reads LSLQNLSCQR…HLQKLNLAAY (203 aa). 39 to 46 provides a ligand contact to ATP; that stretch reads GHNGIGKT.

This sequence belongs to the ABC transporter superfamily. CcmA exporter (TC 3.A.1.107) family. As to quaternary structure, the complex is composed of two ATP-binding proteins (CcmA) and two transmembrane proteins (CcmB).

Its subcellular location is the cell inner membrane. The catalysed reaction is heme b(in) + ATP + H2O = heme b(out) + ADP + phosphate + H(+). In terms of biological role, part of the ABC transporter complex CcmAB involved in the biogenesis of c-type cytochromes; once thought to export heme, this seems not to be the case, but its exact role is uncertain. Responsible for energy coupling to the transport system. In Haemophilus influenzae (strain ATCC 51907 / DSM 11121 / KW20 / Rd), this protein is Cytochrome c biogenesis ATP-binding export protein CcmA.